The sequence spans 720 residues: Probable GTPase-activating protein GYL1 (720 aa).

Residue M1 is modified to N-acetylmethionine. Residues 1-52 show a composition bias toward basic and acidic residues; that stretch reads MNSNEDIHEERIEVPRTPHQTQPEKDSDRIALRDEISVPEGDEKAYSDEKVE. The interval 1–132 is disordered; it reads MNSNEDIHEE…TSPPLPPRAD (132 aa). T17 carries the post-translational modification Phosphothreonine. S37 carries the phosphoserine modification. Residues 54 to 66 are compositionally biased toward polar residues; sequence ATTNASSNFGSNE. The residue at position 73 (S73) is a Phosphoserine. Positions 95–108 are enriched in polar residues; the sequence is SKTILPSDDLSQQL. A compositionally biased stretch (basic and acidic residues) spans 111 to 120; the sequence is EESKVEEALK. S139 is subject to Phosphoserine. Disordered regions lie at residues 144-164 and 179-210; these read SLPP…RPQL and APHG…PRRI. Over residues 184–196 the composition is skewed to polar residues; sequence ATPSKSPTSAVGN. One can recognise a Rab-GAP TBC domain in the interval 297–477; sequence GIPAAYRLVV…RIGDMVFLEG (181 aa). Residue K498 forms a Glycyl lysine isopeptide (Lys-Gly) (interchain with G-Cter in SUMO) linkage. Residues 572–696 adopt a coiled-coil conformation; the sequence is QYKSITEKNL…EIKTANKNGT (125 aa).

The protein belongs to the GYP5 family. In terms of assembly, interacts with GYP5 and RVS167. Is part of SEC4-containing complexes.

It is found in the cytoplasm. Its subcellular location is the bud. It localises to the bud neck. Functionally, probable GTPase-activating protein which stimulates the GTP hydrolysis rate by GYP5 of YPT1 and SEC4. Involved in ER to Golgi trafficking and polarized exocytosis. The protein is Probable GTPase-activating protein GYL1 (GYL1) of Saccharomyces cerevisiae (strain ATCC 204508 / S288c) (Baker's yeast).